Consider the following 75-residue polypeptide: DNA-directed RNA polymerase subunit omega (75 aa).

Belongs to the RNA polymerase subunit omega family. As to quaternary structure, in cyanobacteria the RNAP catalytic core is composed of 2 alpha, 1 beta, 1 beta', 1 gamma and 1 omega subunit. When a sigma factor is associated with the core the holoenzyme is formed, which can initiate transcription.

It carries out the reaction RNA(n) + a ribonucleoside 5'-triphosphate = RNA(n+1) + diphosphate. In terms of biological role, promotes RNA polymerase assembly. Latches the N- and C-terminal regions of the beta' subunit thereby facilitating its interaction with the beta and alpha subunits. This Parasynechococcus marenigrum (strain WH8102) protein is DNA-directed RNA polymerase subunit omega.